We begin with the raw amino-acid sequence, 1103 residues long: Retinal guanylyl cyclase 1 (1103 aa).

A signal peptide spans 1-51 (MTACARRAGGLPDPGLCGPAWWAPSLPRLPRALPRLPLLLLLLLLQPPALS). Topologically, residues 52–462 (AVFTVGVLGP…PNNICGGGLE (411 aa)) are extracellular. Asn-297 carries N-linked (GlcNAc...) asparagine glycosylation. Residues 463–487 (PGLVFLGFLLVVGMGLAGAFLAHYV) traverse the membrane as a helical segment. Topologically, residues 488–1103 (RHRLLHMQMV…LEKARPGQFS (616 aa)) are cytoplasmic. Residues 525–808 (QGSRSSLGAR…DHTFDLFKNI (284 aa)) form the Protein kinase domain. One can recognise a Guanylate cyclase domain in the interval 880 to 1010 (TLYFSDIVGF…DTVNTASRME (131 aa)). Residues 1065–1103 (PIPKPPDLQPGSSNHGISLQEIPPERRRKLEKARPGQFS) form a disordered region.

Belongs to the adenylyl cyclase class-4/guanylyl cyclase family. In terms of assembly, homodimer; requires homodimerization for guanylyl cyclase activity. Interacts with RD3; promotes the exit of GUCY2D from the endoplasmic reticulum and its trafficking to the photoreceptor outer segments. Interaction with RD3 negatively regulates guanylate cyclase activity. As to expression, retina.

Its subcellular location is the photoreceptor outer segment membrane. It localises to the endoplasmic reticulum membrane. It catalyses the reaction GTP = 3',5'-cyclic GMP + diphosphate. Its activity is regulated as follows. Activated by GUCA1A when free calcium ions concentration is low, and inhibited by GUCA1A when free calcium ions concentration is high. Negatively regulated by RD3; inhibits the basal and GUCA1A-stimulated guanylate cyclase activity. In terms of biological role, catalyzes the synthesis of cyclic GMP (cGMP) in rods and cones of photoreceptors. Plays an essential role in phototransduction, by mediating cGMP replenishment. May also participate in the trafficking of membrane-asociated proteins to the photoreceptor outer segment membrane. This chain is Retinal guanylyl cyclase 1 (GUCY2D), found in Homo sapiens (Human).